Consider the following 502-residue polypeptide: Maturase K (502 aa).

Belongs to the intron maturase 2 family. MatK subfamily.

The protein resides in the plastid. It is found in the chloroplast. In terms of biological role, usually encoded in the trnK tRNA gene intron. Probably assists in splicing its own and other chloroplast group II introns. In Vaccinium vitis-idaea (Mountain cranberry), this protein is Maturase K.